The sequence spans 150 residues: Large ribosomal subunit protein bL17 (150 aa).

Residues Asp-126–Glu-150 form a disordered region.

Belongs to the bacterial ribosomal protein bL17 family. As to quaternary structure, part of the 50S ribosomal subunit. Contacts protein L32.

This is Large ribosomal subunit protein bL17 from Solibacter usitatus (strain Ellin6076).